The chain runs to 1054 residues: Filament-like plant protein 6 (1054 aa).

3 coiled-coil regions span residues 64 to 139, 174 to 200, and 250 to 341; these read VQIK…VKQH, AEDR…KDHE, and SNML…RKKL. Disordered regions lie at residues 359–390 and 448–506; these read RDSG…GSEF and EAQL…KEKD. Composition is skewed to low complexity over residues 371-380, 450-461, and 470-494; these read VKVSSPCKSP, QLQQNNSQKSSL, and SNPS…GSLS. Residues 389-463 are a coiled coil; sequence EFSLDNAQKF…NNSQKSSLEV (75 aa). Coiled-coil stretches lie at residues 637–666 and 788–944; these read QNLV…RIHD and ESDS…IFVL. The segment at 951–1054 is disordered; it reads FRPQPEQMRS…SRFFSSKSGY (104 aa). Over residues 1007 to 1032 the composition is skewed to low complexity; that stretch reads PSDSETSDTTTSPSRVGSRLSRSGSS.

Belongs to the FPP family. Interacts with WPP/MAF proteins.

This chain is Filament-like plant protein 6 (FPP6), found in Arabidopsis thaliana (Mouse-ear cress).